A 435-amino-acid polypeptide reads, in one-letter code: Enolase (435 aa).

Residues histidine 155 and glutamate 164 each contribute to the substrate site. Residue glutamate 205 is the Proton donor of the active site. Positions 243, 292, and 319 each coordinate Mg(2+). Substrate-binding positions include glutamate 292, aspartate 319, lysine 344, 371 to 374, and lysine 395; that span reads SHRS. The active-site Proton acceptor is the lysine 344.

This sequence belongs to the enolase family. In terms of assembly, homooctamer. Requires Mg(2+) as cofactor.

It is found in the cytoplasm. The protein localises to the secreted. It localises to the cell surface. The catalysed reaction is (2R)-2-phosphoglycerate = phosphoenolpyruvate + H2O. Its pathway is carbohydrate degradation; glycolysis; pyruvate from D-glyceraldehyde 3-phosphate: step 4/5. In terms of biological role, catalyzes the reversible conversion of 2-phosphoglycerate (2-PG) into phosphoenolpyruvate (PEP). It is essential for the degradation of carbohydrates via glycolysis. 'Moonlights' as a plasminogen receptor and plasmin activator. Binds host (human) plasminogen in vitro; enhances the activity of host tissue-specific plasminogen activator (tPA). This Streptococcus pyogenes serotype M1 protein is Enolase.